A 249-amino-acid polypeptide reads, in one-letter code: Tumor necrosis factor receptor superfamily member 13B (249 aa).

Residues 1 to 128 (MAMAFCPKDQ…LSSDQLTLYC (128 aa)) lie on the Extracellular side of the membrane. TNFR-Cys repeat units follow at residues 5–38 (FCPK…TDFC) and 42–76 (NCRK…AHFC). 6 disulfide bridges follow: cysteine 6-cysteine 19, cysteine 22-cysteine 34, cysteine 26-cysteine 38, cysteine 43-cysteine 58, cysteine 61-cysteine 72, and cysteine 65-cysteine 76. The interval 86–116 (LQPELGRPQAGEVEVRSDNSGRHQGSEHGPG) is disordered. Positions 98–111 (VEVRSDNSGRHQGS) are enriched in basic and acidic residues. Residues 129–149 (TLGVCLCAIFCCFLVALASFL) form a helical; Signal-anchor for type III membrane protein membrane-spanning segment. Residues 150–249 (RRRGEPLPSQ…ASTGDARPAT (100 aa)) are Cytoplasmic-facing. The disordered stretch occupies residues 156-176 (LPSQPAGPRGSQANSPHAHRP).

As to quaternary structure, binds TRAF2, TRAF5 and TRAF6. Binds the NH2-terminal domain of CAMLG with its C-terminus.

The protein resides in the membrane. Functionally, receptor for TNFSF13/APRIL and TNFSF13B/TALL1/BAFF/BLYS that binds both ligands with similar high affinity. Mediates calcineurin-dependent activation of NF-AT, as well as activation of NF-kappa-B and AP-1. Involved in the stimulation of B- and T-cell function and the regulation of humoral immunity. The protein is Tumor necrosis factor receptor superfamily member 13B (Tnfrsf13b) of Mus musculus (Mouse).